We begin with the raw amino-acid sequence, 441 residues long: Xylose isomerase (441 aa).

Catalysis depends on residues histidine 105 and aspartate 108. Mg(2+) contacts are provided by glutamate 236, glutamate 272, histidine 275, aspartate 300, aspartate 311, aspartate 313, and aspartate 343.

Belongs to the xylose isomerase family. As to quaternary structure, homotetramer. Requires Mg(2+) as cofactor.

The protein resides in the cytoplasm. It carries out the reaction alpha-D-xylose = alpha-D-xylulofuranose. The protein is Xylose isomerase of Mesorhizobium japonicum (strain LMG 29417 / CECT 9101 / MAFF 303099) (Mesorhizobium loti (strain MAFF 303099)).